Reading from the N-terminus, the 332-residue chain is L-lactate dehydrogenase A chain (332 aa).

Residues 29–57 (GAVG…VEDK) and Arg-99 each bind NAD(+). Positions 106, 138, and 169 each coordinate substrate. Asn-138 is an NAD(+) binding site. Residue His-193 is the Proton acceptor of the active site. Thr-248 is a binding site for substrate.

It belongs to the LDH/MDH superfamily. LDH family. In terms of assembly, homotetramer.

It is found in the cytoplasm. The catalysed reaction is (S)-lactate + NAD(+) = pyruvate + NADH + H(+). Its pathway is fermentation; pyruvate fermentation to lactate; (S)-lactate from pyruvate: step 1/1. Functionally, interconverts simultaneously and stereospecifically pyruvate and lactate with concomitant interconversion of NADH and NAD(+). The protein is L-lactate dehydrogenase A chain (LDHA) of Alligator mississippiensis (American alligator).